We begin with the raw amino-acid sequence, 200 residues long: Probable GTP-binding protein EngB (200 aa).

Residues 22–199 enclose the EngB-type G domain; it reads NVAEVAFLGR…QDKITGYLFG (178 aa). Residues 30–37, 57–61, 85–88, 155–158, and 177–180 each bind GTP; these read GRSNVGKS, GKTQL, DLPG, TKID, and FLSN. Mg(2+)-binding residues include serine 37 and threonine 59.

Belongs to the TRAFAC class TrmE-Era-EngA-EngB-Septin-like GTPase superfamily. EngB GTPase family. The cofactor is Mg(2+).

Functionally, necessary for normal cell division and for the maintenance of normal septation. The sequence is that of Probable GTP-binding protein EngB from Aliarcobacter butzleri (strain RM4018) (Arcobacter butzleri).